A 379-amino-acid chain; its full sequence is Small ribosomal subunit protein uS2cy (379 aa).

The interval 1–94 (MKLVQFFEIG…MGTSSNRAKS (94 aa)) is N-terminal extension. Residues 83–106 (NQMGTSSNRAKSTDTPAVSTSQNV) are disordered.

This sequence belongs to the universal ribosomal protein uS2 family.

It is found in the plastid. The protein resides in the chloroplast. The chain is Small ribosomal subunit protein uS2cy (rps2-2) from Tetradesmus obliquus (Green alga).